A 171-amino-acid chain; its full sequence is Ly6/PLAUR domain-containing protein 6 (171 aa).

Positions 1–25 (MEPSPALAWLLLLSLVADCLKAAQS) are cleaved as a signal peptide. The 95-residue stretch at 47–141 (FKCFTCEKAA…PRNDTDATFA (95 aa)) folds into the UPAR/Ly6 domain. 6 disulfides stabilise this stretch: cysteine 49/cysteine 77, cysteine 52/cysteine 61, cysteine 70/cysteine 96, cysteine 102/cysteine 121, cysteine 107/cysteine 118, and cysteine 122/cysteine 127. The NxI motif signature appears at 88–90 (NSI). N-linked (GlcNAc...) asparagine glycans are attached at residues asparagine 134 and asparagine 147. Residue asparagine 147 is the site of GPI-anchor amidated asparagine attachment. A propeptide spans 148–171 (QTNGHPHCVSVIVSCLWVWLGLTL) (removed in mature form).

Interacts with nicotinic acetylcholine receptors (nAChRs) including CHRNA3, CHRNA4, CHRNA5, CHRNA6, CHRNA7, CHRNB2 and CHRNB4. Interacts (via NxI motif) with LRP6. Expressed at high levels in the cortex and cerebellum of the brain, at moderate levels in the lung, kidney, and liver, and at low levels in the heart and prostate (at protein level). Expressed in neurons (at protein level).

Its subcellular location is the secreted. It is found in the cytoplasm. It localises to the cell membrane. The protein localises to the synapse. The protein resides in the synaptosome. Its subcellular location is the membrane raft. It is found in the cell projection. It localises to the dendrite. The protein localises to the perikaryon. Functionally, acts as a modulator of nicotinic acetylcholine receptors (nAChRs) function in the brain. Inhibits nicotine-induced Ca(2+) influx through nAChRs. In vitro, specifically inhibits alpha-3:beta-4 and alpha-7 nAChR currents in an allosteric manner. Acts as a positive regulator of Wnt/beta-catenin signaling. The protein is Ly6/PLAUR domain-containing protein 6 (Lypd6) of Rattus norvegicus (Rat).